The primary structure comprises 2430 residues: DNA-directed RNA polymerase subunit beta'' (2430 aa).

Zn(2+) is bound by residues Cys336, Cys455, Cys462, and Cys465.

It belongs to the RNA polymerase beta' chain family. RpoC2 subfamily. As to quaternary structure, in plastids the minimal PEP RNA polymerase catalytic core is composed of four subunits: alpha, beta, beta', and beta''. When a (nuclear-encoded) sigma factor is associated with the core the holoenzyme is formed, which can initiate transcription. Requires Zn(2+) as cofactor.

Its subcellular location is the plastid. The protein localises to the chloroplast. The enzyme catalyses RNA(n) + a ribonucleoside 5'-triphosphate = RNA(n+1) + diphosphate. In terms of biological role, DNA-dependent RNA polymerase catalyzes the transcription of DNA into RNA using the four ribonucleoside triphosphates as substrates. In Stigeoclonium helveticum (Green alga), this protein is DNA-directed RNA polymerase subunit beta''.